We begin with the raw amino-acid sequence, 1089 residues long: PALM2-AKAP2 fusion protein (1089 aa).

Residues 70–107 (SEEDEFKVKQLEDNIQRLEQEIQALESEESQISAKEQI) are a coiled coil. Disordered stretches follow at residues 165–194 (SEDA…SPDH), 210–231 (PGVT…PSHN), and 289–362 (PAHS…SRDG). Residues 173-183 (SKQDNCGDSRL) show a composition bias toward basic and acidic residues. Phosphoserine occurs at positions 315 and 318. Over residues 317–328 (PSDRMAEGERAN) the composition is skewed to basic and acidic residues. The span at 329-347 (GHSTDQPQDLLGNSLQAPA) shows a compositional bias: polar residues. Residue S348 is modified to Phosphoserine. Residues 348-357 (SPSSSTSSHC) show a composition bias toward low complexity. A Glycyl lysine isopeptide (Lys-Gly) (interchain with G-Cter in SUMO1); alternate cross-link involves residue K370. K370 participates in a covalent cross-link: Glycyl lysine isopeptide (Lys-Gly) (interchain with G-Cter in SUMO2); alternate. The tract at residues 429-517 (KNPGIAAKWW…LSTSQPCTAP (89 aa)) is disordered. Residues 455-470 (LESHRKYKERKEKRAQ) show a composition bias toward basic and acidic residues. Residues 471–508 (QEQLQLQQQQQQQLQQQQLQQQQLQQQQLQQQLQQQQL) are compositionally biased toward low complexity. Position 553 is a phosphoserine (S553). Residues 592–644 (TVGGTLEDGGTQAAKEQKAPCVSESQSAGAGPANAATQGKEGPYSEPSKRGPL) are disordered. 3 positions are modified to phosphoserine: S678, S682, and S734. Polar residues predominate over residues 712 to 749 (FSMDNISDSGASNETPSALQENSLADFSLPQTPQTDNP). Disordered regions lie at residues 712 to 783 (FSMD…DPLE), 800 to 899 (EQVD…YFSK), and 915 to 934 (TQES…KQRT). Residue T743 is modified to Phosphothreonine. The tract at residues 782–795 (LEYQAGLLVQNAIQ) is PKA-RII subunit binding domain. Positions 801–814 (QVDKAEAHTSKEGS) are enriched in basic and acidic residues. S847 is subject to Phosphoserine. Basic and acidic residues predominate over residues 850–871 (QEKRDILPKNLPAEDRALREKG). Residues 928-958 (RSRKQRTLSMIEEEIRAAQEREEELKRQRQV) are a coiled coil. Phosphoserine is present on residues S936, S964, S995, and S1002. Residues 946–1021 (QEREEELKRQ…AAGTQRPKNL (76 aa)) form a disordered region.

As to expression, highly expressed in lung and weakly in thymus and cerebellum. Little or no expression in liver, heart and cerebral cortex. All isoforms are expressed in lung, but KL2A and KL2B isoforms are the principal isoforms in cerebellum.

It localises to the apical cell membrane. In terms of biological role, binds to regulatory subunit (RII) of protein kinase A. May be involved in establishing polarity in signaling systems or in integrating PKA-RII isoforms with downstream effectors to capture, amplify and focus diffuse, trans-cellular signals carried by cAMP. Binds tp and modulates the structure of the actin cytoskeleton. The polypeptide is PALM2-AKAP2 fusion protein (Mus musculus (Mouse)).